A 284-amino-acid polypeptide reads, in one-letter code: Diaminopimelate epimerase (284 aa).

Substrate is bound by residues N14 and N67. C76 functions as the Proton donor in the catalytic mechanism. Residues 77 to 78, N166, N199, and 217 to 218 each bind substrate; these read GN and ER. Catalysis depends on C226, which acts as the Proton acceptor. Residue 227–228 coordinates substrate; the sequence is GT.

The protein belongs to the diaminopimelate epimerase family. Homodimer.

It localises to the cytoplasm. It carries out the reaction (2S,6S)-2,6-diaminopimelate = meso-2,6-diaminopimelate. The protein operates within amino-acid biosynthesis; L-lysine biosynthesis via DAP pathway; DL-2,6-diaminopimelate from LL-2,6-diaminopimelate: step 1/1. Catalyzes the stereoinversion of LL-2,6-diaminopimelate (L,L-DAP) to meso-diaminopimelate (meso-DAP), a precursor of L-lysine and an essential component of the bacterial peptidoglycan. This chain is Diaminopimelate epimerase, found in Geobacillus sp. (strain WCH70).